Consider the following 795-residue polypeptide: Levansucrase (795 aa).

The signal sequence occupies residues 1–36 (METKVRKKMYKKGKFWVVATITTAMLTGIGLSSVQA). Composition is skewed to polar residues over residues 42-66 (TQVSSELAERSQVQENTTASSSAAE) and 112-130 (QAATVTKTSASTPEVGQTN). 2 disordered regions span residues 42–83 (TQVS…NPAA) and 103–138 (ESKASKTKDQAATVTKTSASTPEVGQTNEKAKATKE). Trp-245, Asp-246, and Ser-315 together coordinate sucrose. Asp-246 acts as the Nucleophile in catalysis. Position 394 (Asp-394) interacts with Ca(2+). Sucrose is bound by residues Arg-399 and Asp-400. Residues Gln-425, Asn-464, and Asp-496 each coordinate Ca(2+). Glu-497 serves as a coordination point for sucrose. The active-site Proton donor/acceptor is Glu-499. Arg-517 lines the sucrose pocket. The helical transmembrane segment at 774 to 794 (GNSFFAALLALFSAFCVSIGF) threads the bilayer.

This sequence belongs to the glycosyl hydrolase 68 family.

It localises to the cell membrane. Its subcellular location is the cell surface. The enzyme catalyses [6)-beta-D-fructofuranosyl-(2-&gt;](n) alpha-D-glucopyranoside + sucrose = [6)-beta-D-fructofuranosyl-(2-&gt;](n+1) alpha-D-glucopyranoside + D-glucose. With respect to regulation, ca(2+) may play an important structural role and promote stability of levansucrase. Catalyzes the synthesis of levan, a fructose polymer, by transferring the fructosyl moiety from sucrose to a growing acceptor molecule. Also displays sucrose hydrolase activity. In Streptococcus mutans serotype c (strain ATCC 700610 / UA159), this protein is Levansucrase.